The primary structure comprises 270 residues: Cbp/p300-interacting transactivator 2 (270 aa).

Residues 138–201 (LHPAAGHQMN…SGGGSGSGNM (64 aa)) form a disordered region. Gly residues predominate over residues 165 to 198 (STPGGSGGSSTPGGSGSSSGGGAGSSNSGGGSGS).

The protein belongs to the CITED family. Interacts (via C-terminus) with SMAD2. Interacts (via C-terminus) with SMAD3 (via MH2 domain). Interacts with LHX2 (via LIM domains). Interacts with WT1. Interacts (via C-terminus) with EP300 (via CH1 domain); the interaction is stimulated in response to hypoxia. Interacts with PPARA. Interacts (via C-terminus) with TFAP2A, TFAP2B and TFAP2C.

It localises to the nucleus. Transcriptional coactivator of the p300/CBP-mediated transcription complex. Acts as a bridge, linking TFAP2 transcription factors and the p300/CBP transcriptional coactivator complex in order to stimulate TFAP2-mediated transcriptional activation. Positively regulates TGF-beta signaling through its association with the SMAD/p300/CBP-mediated transcriptional coactivator complex. Stimulates the peroxisome proliferator-activated receptors PPARA transcriptional activity. Enhances estrogen-dependent transactivation mediated by estrogen receptors. Also acts as a transcriptional corepressor; interferes with the binding of the transcription factors HIF1A or STAT2 and the p300/CBP transcriptional coactivator complex. Participates in sex determination and early gonad development by stimulating transcription activation of SRY. Plays a role in controlling left-right patterning during embryogenesis; potentiates transcriptional activation of NODAL-mediated gene transcription in the left lateral plate mesoderm (LPM). Plays an essential role in differentiation of the adrenal cortex from the adrenogonadal primordium (AGP); stimulates WT1-mediated transcription activation thereby up-regulating the nuclear hormone receptor NR5A1 promoter activity. Associates with chromatin to the PITX2 P1 promoter region. The protein is Cbp/p300-interacting transactivator 2 (CITED2) of Homo sapiens (Human).